Consider the following 634-residue polypeptide: Sodium-dependent neutral amino acid transporter B(0)AT1 (634 aa).

The Cytoplasmic segment spans residues 1–41 (MVRLVLPNPGLDTRILSLAELETIEQEEASSRPKWDNKAQY). Phosphoserine is present on serine 17. Residues 42–62 (LLTCVGFCVGLGNVWRFPYLC) form a helical membrane-spanning segment. Residues 63-65 (QSH) are Extracellular-facing. A helical transmembrane segment spans residues 66–86 (GGGAFMIPFLILLVLEGIPLL). Residues 87 to 120 (HLEFAIGQRLRRGSLGVWSSIHPALKGVGLTSML) are Cytoplasmic-facing. A helical membrane pass occupies residues 121–141 (VSFVVGLYYNTIISWIMWYLF). The Extracellular portion of the chain corresponds to 142-192 (NSFQEPLPWSECPLNENQTGYVDECARSSPVDYFWYRETLNISTSISDSGS). 2 N-linked (GlcNAc...) asparagine glycosylation sites follow: asparagine 158 and asparagine 182. Residues 193 to 213 (IQWRMLLCLACAWSVLYMCTI) form a helical membrane-spanning segment. Over 214-221 (RGIETTGK) the chain is Cytoplasmic. Residues 222 to 242 (VVYITSTLPYVVLTIFLIRGL) traverse the membrane as a helical segment. The Extracellular segment spans residues 243–268 (TLKGATKGIIYLFTPNVTELANPVTW). Asparagine 258 is a glycosylation site (N-linked (GlcNAc...) asparagine). Residues 269 to 289 (LDAGAQVFFSFSLAFGGLISF) form a helical membrane-spanning segment. Residues 290 to 304 (SSYNSVHNNCERDSV) lie on the Cytoplasmic side of the membrane. The chain crosses the membrane as a helical span at residues 305 to 325 (IVSIINGFTSVYVAIVIYSII). The Extracellular portion of the chain corresponds to 326–413 (GFRATQRYDD…TEAITKMPVS (88 aa)). N-linked (GlcNAc...) asparagine glycosylation is found at asparagine 354 and asparagine 368. A helical membrane pass occupies residues 414–434 (PLWSVLFFIMLFCLGLSSMFG). The Cytoplasmic portion of the chain corresponds to 435–456 (NMEGVVVPLQDLKVIPPKWPKE). A helical membrane pass occupies residues 457–477 (LLTGLICLGTFLIGFIFTLNS). Residues 478–487 (GQYWLSLLDS) lie on the Extracellular side of the membrane. Residues 488–508 (YAVSIPLLIIAFCEMFSVVYV) form a helical membrane-spanning segment. Over 509-531 (YGVDRFNKDIEFMIGHKPNIFWQ) the chain is Cytoplasmic. The helical transmembrane segment at 532–552 (VTWRVVSPLLMLIILVFFFVV) threads the bilayer. At 553–581 (QVSQELTYSIWNPGYEEFPKSQKISHPNW) the chain is on the extracellular side. A helical membrane pass occupies residues 582–602 (VYAVVVIVAGVPSLTIPSYAI). Over 603–634 (YKLIRNCCQKPGDRQGLVSTLSTASMNGDLKY) the chain is Cytoplasmic. The residue at position 627 (serine 627) is a Phosphoserine.

Belongs to the sodium:neurotransmitter symporter (SNF) (TC 2.A.22) family. SLC6A19 subfamily. As to quaternary structure, interacts in a tissue-specific manner with ACE2 in small intestine and with CLTRN in the kidney. Interacts with CLTRN; this interaction is required for trafficking of SLC6A19 to the plasma membrane and for its catalytic activation in kidneys. Interacts with ACE2; this interaction is required for trafficking of SLC6A19 to the plasma membrane and for its catalytic activation in intestine. Interacts with ANPEP; the interaction positively regulates its amino acid transporter activity.

The protein resides in the membrane. It carries out the reaction L-alanine(in) + Na(+)(in) = L-alanine(out) + Na(+)(out). The catalysed reaction is L-cysteine(in) + Na(+)(in) = L-cysteine(out) + Na(+)(out). It catalyses the reaction L-glutamine(in) + Na(+)(in) = L-glutamine(out) + Na(+)(out). The enzyme catalyses glycine(in) + Na(+)(in) = glycine(out) + Na(+)(out). It carries out the reaction L-isoleucine(in) + Na(+)(in) = L-isoleucine(out) + Na(+)(out). The catalysed reaction is L-leucine(in) + Na(+)(in) = L-leucine(out) + Na(+)(out). It catalyses the reaction L-methionine(in) + Na(+)(in) = L-methionine(out) + Na(+)(out). The enzyme catalyses L-phenylalanine(in) + Na(+)(in) = L-phenylalanine(out) + Na(+)(out). It carries out the reaction L-serine(in) + Na(+)(in) = L-serine(out) + Na(+)(out). The catalysed reaction is L-tryptophan(in) + Na(+)(in) = L-tryptophan(out) + Na(+)(out). It catalyses the reaction L-tyrosine(in) + Na(+)(in) = L-tyrosine(out) + Na(+)(out). The enzyme catalyses L-valine(in) + Na(+)(in) = L-valine(out) + Na(+)(out). Transporter that mediates resorption of neutral amino acids across the apical membrane of renal and intestinal epithelial cells. This uptake is sodium-dependent and chloride-independent. Requires CLTRN in kidney or ACE2 in intestine for cell surface expression and amino acid transporter activity. The protein is Sodium-dependent neutral amino acid transporter B(0)AT1 (SLC6A19) of Pongo abelii (Sumatran orangutan).